The chain runs to 500 residues: Coiled-coil domain-containing protein 125 (500 aa).

Residues 1-105 (MSKVPRSSSE…TDSNSELSDE (105 aa)) form a disordered region. Positions 10–23 (EAEDIWETEDDMTE) are enriched in acidic residues. Positions 92-101 (RLSSTDSNSE) are enriched in polar residues. Coiled coils occupy residues 101–237 (ELSD…LEAL) and 286–314 (STRKLVLQLRHELETLQKSKEEAHITADA). Position 492 is a phosphoserine (S492).

Expressed in many tissues, with highest levels in spleen, thymus and bone marrow.

The protein localises to the cytoplasm. May be involved in the regulation of cell migration. The chain is Coiled-coil domain-containing protein 125 (Ccdc125) from Mus musculus (Mouse).